A 168-amino-acid polypeptide reads, in one-letter code: Crossover junction endodeoxyribonuclease RuvC (168 aa).

Residues aspartate 9, glutamate 70, and aspartate 145 contribute to the active site. Positions 9, 70, and 145 each coordinate Mg(2+).

This sequence belongs to the RuvC family. In terms of assembly, homodimer which binds Holliday junction (HJ) DNA. The HJ becomes 2-fold symmetrical on binding to RuvC with unstacked arms; it has a different conformation from HJ DNA in complex with RuvA. In the full resolvosome a probable DNA-RuvA(4)-RuvB(12)-RuvC(2) complex forms which resolves the HJ. Requires Mg(2+) as cofactor.

The protein resides in the cytoplasm. It catalyses the reaction Endonucleolytic cleavage at a junction such as a reciprocal single-stranded crossover between two homologous DNA duplexes (Holliday junction).. In terms of biological role, the RuvA-RuvB-RuvC complex processes Holliday junction (HJ) DNA during genetic recombination and DNA repair. Endonuclease that resolves HJ intermediates. Cleaves cruciform DNA by making single-stranded nicks across the HJ at symmetrical positions within the homologous arms, yielding a 5'-phosphate and a 3'-hydroxyl group; requires a central core of homology in the junction. The consensus cleavage sequence is 5'-(A/T)TT(C/G)-3'. Cleavage occurs on the 3'-side of the TT dinucleotide at the point of strand exchange. HJ branch migration catalyzed by RuvA-RuvB allows RuvC to scan DNA until it finds its consensus sequence, where it cleaves and resolves the cruciform DNA. This Chlamydia caviae (strain ATCC VR-813 / DSM 19441 / 03DC25 / GPIC) (Chlamydophila caviae) protein is Crossover junction endodeoxyribonuclease RuvC.